A 375-amino-acid polypeptide reads, in one-letter code: Succinyl-diaminopimelate desuccinylase (375 aa).

His-66 provides a ligand contact to Zn(2+). The active site involves Asp-68. Zn(2+) is bound at residue Asp-99. The Proton acceptor role is filled by Glu-133. Residues Glu-134, Glu-162, and His-348 each coordinate Zn(2+).

It belongs to the peptidase M20A family. DapE subfamily. As to quaternary structure, homodimer. The cofactor is Zn(2+). Requires Co(2+) as cofactor.

The enzyme catalyses N-succinyl-(2S,6S)-2,6-diaminopimelate + H2O = (2S,6S)-2,6-diaminopimelate + succinate. It participates in amino-acid biosynthesis; L-lysine biosynthesis via DAP pathway; LL-2,6-diaminopimelate from (S)-tetrahydrodipicolinate (succinylase route): step 3/3. Catalyzes the hydrolysis of N-succinyl-L,L-diaminopimelic acid (SDAP), forming succinate and LL-2,6-diaminopimelate (DAP), an intermediate involved in the bacterial biosynthesis of lysine and meso-diaminopimelic acid, an essential component of bacterial cell walls. This chain is Succinyl-diaminopimelate desuccinylase, found in Escherichia coli O6:K15:H31 (strain 536 / UPEC).